The following is an 87-amino-acid chain: Small ribosomal subunit protein uS17 (87 aa).

It belongs to the universal ribosomal protein uS17 family. Part of the 30S ribosomal subunit.

Its function is as follows. One of the primary rRNA binding proteins, it binds specifically to the 5'-end of 16S ribosomal RNA. This chain is Small ribosomal subunit protein uS17, found in Staphylococcus carnosus (strain TM300).